Consider the following 122-residue polypeptide: MPAARQQRGAAVEAAARAQLEQAGLRLVAGNANYRGGELDLVMRDGPMLVFVEVRYRRDARFGGGAASVDFRKRRKLVLAAQLFLAAHPALAALPCRFDVVEASGEPPLLHWIRDAFRLDDC.

Belongs to the UPF0102 family.

This is UPF0102 protein xcc-b100_3645 from Xanthomonas campestris pv. campestris (strain B100).